The sequence spans 156 residues: 6,7-dimethyl-8-ribityllumazine synthase (156 aa).

5-amino-6-(D-ribitylamino)uracil contacts are provided by residues phenylalanine 23, 57–59, and 81–83; these read AFE and AVI. 86 to 87 serves as a coordination point for (2S)-2-hydroxy-3-oxobutyl phosphate; that stretch reads ST. Residue histidine 89 is the Proton donor of the active site. A 5-amino-6-(D-ribitylamino)uracil-binding site is contributed by phenylalanine 114. Position 128 (arginine 128) interacts with (2S)-2-hydroxy-3-oxobutyl phosphate.

It belongs to the DMRL synthase family.

It carries out the reaction (2S)-2-hydroxy-3-oxobutyl phosphate + 5-amino-6-(D-ribitylamino)uracil = 6,7-dimethyl-8-(1-D-ribityl)lumazine + phosphate + 2 H2O + H(+). Its pathway is cofactor biosynthesis; riboflavin biosynthesis; riboflavin from 2-hydroxy-3-oxobutyl phosphate and 5-amino-6-(D-ribitylamino)uracil: step 1/2. Catalyzes the formation of 6,7-dimethyl-8-ribityllumazine by condensation of 5-amino-6-(D-ribitylamino)uracil with 3,4-dihydroxy-2-butanone 4-phosphate. This is the penultimate step in the biosynthesis of riboflavin. This Campylobacter lari (strain RM2100 / D67 / ATCC BAA-1060) protein is 6,7-dimethyl-8-ribityllumazine synthase.